Here is a 257-residue protein sequence, read N- to C-terminus: Imidazole glycerol phosphate synthase subunit HisF (257 aa).

Catalysis depends on residues D11 and D130.

This sequence belongs to the HisA/HisF family. As to quaternary structure, heterodimer of HisH and HisF.

Its subcellular location is the cytoplasm. It catalyses the reaction 5-[(5-phospho-1-deoxy-D-ribulos-1-ylimino)methylamino]-1-(5-phospho-beta-D-ribosyl)imidazole-4-carboxamide + L-glutamine = D-erythro-1-(imidazol-4-yl)glycerol 3-phosphate + 5-amino-1-(5-phospho-beta-D-ribosyl)imidazole-4-carboxamide + L-glutamate + H(+). The protein operates within amino-acid biosynthesis; L-histidine biosynthesis; L-histidine from 5-phospho-alpha-D-ribose 1-diphosphate: step 5/9. In terms of biological role, IGPS catalyzes the conversion of PRFAR and glutamine to IGP, AICAR and glutamate. The HisF subunit catalyzes the cyclization activity that produces IGP and AICAR from PRFAR using the ammonia provided by the HisH subunit. The chain is Imidazole glycerol phosphate synthase subunit HisF from Proteus mirabilis (strain HI4320).